Here is a 361-residue protein sequence, read N- to C-terminus: Holliday junction branch migration complex subunit RuvB (361 aa).

Residues 1–12 (MNWDETGPETDE) show a composition bias toward acidic residues. A disordered region spans residues 1–21 (MNWDETGPETDEPTGPVLDDR). The interval 13 to 199 (PTGPVLDDRL…FGFTGHMEFY (187 aa)) is large ATPase domain (RuvB-L). Residues Leu38, Arg39, Gly80, Lys83, Thr84, Thr85, 146-148 (EDF), Arg189, Tyr199, and Arg236 contribute to the ATP site. Thr84 serves as a coordination point for Mg(2+). Positions 200–270 (APAELERVLH…IAMAALKVYE (71 aa)) are small ATPAse domain (RuvB-S). The tract at residues 273–361 (ARGLDRLDRA…AKGQQGLFGA (89 aa)) is head domain (RuvB-H). DNA contacts are provided by Arg309, Arg328, and Arg333.

It belongs to the RuvB family. In terms of assembly, homohexamer. Forms an RuvA(8)-RuvB(12)-Holliday junction (HJ) complex. HJ DNA is sandwiched between 2 RuvA tetramers; dsDNA enters through RuvA and exits via RuvB. An RuvB hexamer assembles on each DNA strand where it exits the tetramer. Each RuvB hexamer is contacted by two RuvA subunits (via domain III) on 2 adjacent RuvB subunits; this complex drives branch migration. In the full resolvosome a probable DNA-RuvA(4)-RuvB(12)-RuvC(2) complex forms which resolves the HJ.

Its subcellular location is the cytoplasm. It catalyses the reaction ATP + H2O = ADP + phosphate + H(+). Its function is as follows. The RuvA-RuvB-RuvC complex processes Holliday junction (HJ) DNA during genetic recombination and DNA repair, while the RuvA-RuvB complex plays an important role in the rescue of blocked DNA replication forks via replication fork reversal (RFR). RuvA specifically binds to HJ cruciform DNA, conferring on it an open structure. The RuvB hexamer acts as an ATP-dependent pump, pulling dsDNA into and through the RuvAB complex. RuvB forms 2 homohexamers on either side of HJ DNA bound by 1 or 2 RuvA tetramers; 4 subunits per hexamer contact DNA at a time. Coordinated motions by a converter formed by DNA-disengaged RuvB subunits stimulates ATP hydrolysis and nucleotide exchange. Immobilization of the converter enables RuvB to convert the ATP-contained energy into a lever motion, pulling 2 nucleotides of DNA out of the RuvA tetramer per ATP hydrolyzed, thus driving DNA branch migration. The RuvB motors rotate together with the DNA substrate, which together with the progressing nucleotide cycle form the mechanistic basis for DNA recombination by continuous HJ branch migration. Branch migration allows RuvC to scan DNA until it finds its consensus sequence, where it cleaves and resolves cruciform DNA. The sequence is that of Holliday junction branch migration complex subunit RuvB from Streptomyces griseus subsp. griseus (strain JCM 4626 / CBS 651.72 / NBRC 13350 / KCC S-0626 / ISP 5235).